The sequence spans 791 residues: MSEDGASKCQDSIQLIDEQKQFNEKTLEYFKRCIGERDVGLDYHVISVFGSQSSGKSTLLNALFNTKFDTMNAQVKRQQTTKGIWIAHTREVQTTANTGKGVDFFVLDVEGSDGAERGEDKDFERKAALFALATSEVLIVNMWEQQVGLYQGNNMGLLKTVFEVNLSLFGHKKDKQKILLLFVVRDFTGFTPLSSLQETLTNELQAMWSELNKPAGAEGSSLDDFFDFAFTGLSHKLFKPEEFASDVAKLGDKFTDLKREDYYLSGKYHQGLPLDGWSFYADSCWEQIENNKDLDLPTQQTLVANFKTEEIANNAFEHFSTAFSKLSSSLPGPELAASMKELKDQCTKEYDNYGSRYMKAVYLEKRGELLDKIKTKFSDAIAVHMSKLFNSLVSTFQSTVAQNAACQPLSERLKVGKERVMQVFEQETSDFVALELIPSVDADASALLEKIDELAERERGKEMKAIILRAKKYQFTHTRDDIVHLLSHPQDNVWQLVMDHFDDVFRRSVLKYKLPNLGDVTDESTAYDFQLDLIEEDNYALYLKIRSNAWTILYDIIHQYLKEDNVVSILRERFESKFRYDQNDVPRLWKNEEEVDAGFKVAREHALNMLNTLSIASCDGVEIVPDVPLASDEDEAQDEQGLYNEKRFGHILTAIQKEKIIQHFKRFANVAVVEAKRSTIKSHTHIPMWIYAIIAVLGWNEFMLVLRNPLFIALMLLIVGAAYTVHRLNLWTPLATFASAAVNETTHAVKAKLRTILLDDEHPKNASSKPVESFEMQDLSVNETKENANES.

The Cytoplasmic segment spans residues 1 to 685 (MSEDGASKCQ…KRSTIKSHTH (685 aa)). The 229-residue stretch at 40 to 268 (GLDYHVISVF…REDYYLSGKY (229 aa)) folds into the GB1/RHD3-type G domain. 50–57 (GSQSSGKS) provides a ligand contact to GTP. The helical transmembrane segment at 686 to 706 (IPMWIYAIIAVLGWNEFMLVL) threads the bilayer. Residues 707 to 709 (RNP) lie on the Lumenal side of the membrane. Residues 710 to 730 (LFIALMLLIVGAAYTVHRLNL) form a helical membrane-spanning segment. Over 731–791 (WTPLATFASA…NETKENANES (61 aa)) the chain is Cytoplasmic. The segment at 763–791 (PKNASSKPVESFEMQDLSVNETKENANES) is disordered.

It belongs to the TRAFAC class dynamin-like GTPase superfamily. GB1/RHD3 GTPase family. RHD3 subfamily.

It localises to the endoplasmic reticulum membrane. Functionally, cooperates with the reticulon proteins and tubule-shaping DP1 family proteins to generate and maintain the structure of the tubular endoplasmic reticulum network. Has GTPase activity, which is required for its function in ER organization. This is Protein SEY1 from Eremothecium gossypii (strain ATCC 10895 / CBS 109.51 / FGSC 9923 / NRRL Y-1056) (Yeast).